Consider the following 248-residue polypeptide: MRTPLLPLARSVLLLLVLGSGHYAAALELNDPSSGKGESLSGDHSAGGLELSVGREVSTISEMPSGSELSTGDYDYSEEYDNEPQISGYIIDDSVRVEQVIKPKKNKTEGEKSTEKPKRKKKGGKNGKGRRNKKKKNPCTAKFQNFCIHGECRYIENLEVVTCNCHQDYFGERCGEKSMKTHSEDDKDLSKIAVVAVTIFVSAIILAAIGIGIVITVHLWKRYFREYEGETEERRRLRQENGTVHAIA.

The N-terminal stretch at 1–26 (MRTPLLPLARSVLLLLVLGSGHYAAA) is a signal peptide. A propeptide spanning residues 27–99 (LELNDPSSGK…IIDDSVRVEQ (73 aa)) is cleaved from the precursor. Disordered regions lie at residues 29 to 48 (LNDP…SAGG), 57 to 77 (VSTI…YDYS), and 100 to 136 (VIKP…KKKK). The segment covering 58–70 (STISEMPSGSELS) has biased composition (polar residues). A compositionally biased stretch (basic and acidic residues) spans 100–116 (VIKPKKNKTEGEKSTEK). An N-linked (GlcNAc...) asparagine glycan is attached at asparagine 106. Positions 117 to 136 (PKRKKKGGKNGKGRRNKKKK) are enriched in basic residues. Positions 135–175 (KKNPCTAKFQNFCIHGECRYIENLEVVTCNCHQDYFGERCG) constitute an EGF-like domain. 3 disulfide bridges follow: cysteine 139–cysteine 152, cysteine 147–cysteine 163, and cysteine 165–cysteine 174. Residues 192-215 (IAVVAVTIFVSAIILAAIGIGIVI) form a helical membrane-spanning segment. Asparagine 241 is a glycosylation site (N-linked (GlcNAc...) asparagine).

It belongs to the amphiregulin family. The immature precursor interacts with CNIH.

It is found in the membrane. Functionally, ligand of the EGF receptor/EGFR. Autocrine growth factor as well as a mitogen for a broad range of target cells including astrocytes, Schwann cells and fibroblasts. The chain is Amphiregulin (Areg) from Mus musculus (Mouse).